The chain runs to 92 residues: Small ribosomal subunit protein uS19 (92 aa).

This sequence belongs to the universal ribosomal protein uS19 family.

In terms of biological role, protein S19 forms a complex with S13 that binds strongly to the 16S ribosomal RNA. This is Small ribosomal subunit protein uS19 from Treponema denticola (strain ATCC 35405 / DSM 14222 / CIP 103919 / JCM 8153 / KCTC 15104).